We begin with the raw amino-acid sequence, 460 residues long: Cysteine--tRNA ligase (460 aa).

Cys29 is a Zn(2+) binding site. The short motif at 31-41 is the 'HIGH' region element; the sequence is MTIYDLCHIGH. Zn(2+)-binding residues include Cys213, His238, and Glu242. The 'KMSKS' region motif lies at 270–274; it reads KMSKS. Lys273 serves as a coordination point for ATP.

This sequence belongs to the class-I aminoacyl-tRNA synthetase family. In terms of assembly, monomer. Zn(2+) is required as a cofactor.

It is found in the cytoplasm. The enzyme catalyses tRNA(Cys) + L-cysteine + ATP = L-cysteinyl-tRNA(Cys) + AMP + diphosphate. In Verminephrobacter eiseniae (strain EF01-2), this protein is Cysteine--tRNA ligase.